We begin with the raw amino-acid sequence, 127 residues long: Ribonuclease P protein component (127 aa).

The disordered stretch occupies residues 99-127; the sequence is ALSASLRQQLRDGIDRSARRQEPAAERQR. Over residues 107 to 127 the composition is skewed to basic and acidic residues; the sequence is QLRDGIDRSARRQEPAAERQR.

It belongs to the RnpA family. As to quaternary structure, consists of a catalytic RNA component (M1 or rnpB) and a protein subunit.

The catalysed reaction is Endonucleolytic cleavage of RNA, removing 5'-extranucleotides from tRNA precursor.. Its function is as follows. RNaseP catalyzes the removal of the 5'-leader sequence from pre-tRNA to produce the mature 5'-terminus. It can also cleave other RNA substrates such as 4.5S RNA. The protein component plays an auxiliary but essential role in vivo by binding to the 5'-leader sequence and broadening the substrate specificity of the ribozyme. The protein is Ribonuclease P protein component of Mycobacteroides abscessus (strain ATCC 19977 / DSM 44196 / CCUG 20993 / CIP 104536 / JCM 13569 / NCTC 13031 / TMC 1543 / L948) (Mycobacterium abscessus).